The chain runs to 369 residues: Transaldolase (369 aa).

Lys-140 (schiff-base intermediate with substrate) is an active-site residue.

The protein belongs to the transaldolase family. Type 2 subfamily.

The protein localises to the cytoplasm. It carries out the reaction D-sedoheptulose 7-phosphate + D-glyceraldehyde 3-phosphate = D-erythrose 4-phosphate + beta-D-fructose 6-phosphate. Its pathway is carbohydrate degradation; pentose phosphate pathway; D-glyceraldehyde 3-phosphate and beta-D-fructose 6-phosphate from D-ribose 5-phosphate and D-xylulose 5-phosphate (non-oxidative stage): step 2/3. Functionally, transaldolase is important for the balance of metabolites in the pentose-phosphate pathway. The chain is Transaldolase from Parafrankia sp. (strain EAN1pec).